Here is a 210-residue protein sequence, read N- to C-terminus: MRKRQQSQNEGTPAVSQAPGNQRPNNTCCFCWCCCCSCSCLTVRNEERGENAGRPTHTTKMESIQVLEECQNPTAEEVLSWSQNFDKMMKAPAGRNLFREFLRTEYSEENLLFWLACEDLKKEQNKKVIEEKARMIYEDYISILSPKEVSLDSRVREVINRNLLDPNPHMYEDAQLQIYTLMHRDSFPRFLNSQIYKSFVESTAGSSSES.

The interval 1–21 (MRKRQQSQNEGTPAVSQAPGN) is disordered. One can recognise an RGS domain in the interval 84-200 (NFDKMMKAPA…LNSQIYKSFV (117 aa)). Residue Tyr137 is modified to Phosphotyrosine.

In terms of assembly, interacts with GNAI1 and GNAQ. Interacts with GNAZ and GNAI2. Interacts with OPRM1. Forms a complex with mu-opioid receptors and G(alpha)z/i2 subunits, including GNAZ and GNAI2; the formation of this complex results in mu-opioid receptor desensitization. Interacts with HINT1. In terms of processing, N- and O-glycosylated in synapsomal membranes. Post-translationally, serine phosphorylated in synapsomal membranes. Sumoylated with SUMO1 and SUM02 in synaptosomes. The sumoylated forms act as a scaffold for sequestering mu-opioid receptor-activated G(alpha) subunits. Desumoylated by HINT1. As to expression, predominantly expressed in the cerebellum. Also expressed in the cortex and medulla. Weakly expressed in a number of peripheral tissues notably spleen, lung and leukocytes.

The protein localises to the membrane. It localises to the synapse. Its subcellular location is the synaptosome. It is found in the nucleus. The protein resides in the cytoplasm. Functionally, regulates G protein-coupled receptor signaling cascades, including signaling via muscarinic acetylcholine receptor CHRM2 and dopamine receptor DRD2. Inhibits signal transduction by increasing the GTPase activity of G protein alpha subunits, thereby driving them into their inactive GDP-bound form. Binds selectively to GNAZ and GNAI2 subunits, accelerates their GTPase activity and regulates their signaling activities. Negatively regulates mu-opioid receptor-mediated activation of the G-proteins. The sequence is that of Regulator of G-protein signaling 17 (RGS17) from Homo sapiens (Human).